An 87-amino-acid polypeptide reads, in one-letter code: Chromosomal protein MC1b (87 aa).

In terms of biological role, protects DNA against thermal denaturation and modulates transcription. In Methanothrix soehngenii (Methanosaeta concilii), this protein is Chromosomal protein MC1b.